The following is a 456-amino-acid chain: Two pore potassium channel c (456 aa).

Over residues 1–19 (MDTEPLLSPLSPSPHLLHP) the composition is skewed to low complexity. The interval 1-112 (MDTEPLLSPL…PPSLFDFIGG (112 aa)) is disordered. Topologically, residues 1–152 (MDTEPLLSPL…RNPPPPPRRP (152 aa)) are cytoplasmic. The span at 52–67 (HPPPPPPPPPPPPPPP) shows a compositional bias: pro residues. A helical membrane pass occupies residues 153–173 (AIVLHAFLFLLAYLAMGVTFY). An intramembrane region (pore-forming) is located at residues 192–211 (DALYFCIVTLCTIGYGDITP). The chain crosses the membrane as a helical span at residues 223 to 243 (FVLIGFGFVDILLSGMVSYVL). Over 244 to 279 (DLQEHLLITALKNPRSVRKHRHNYIFDLKKGRMRVR) the chain is Cytoplasmic. Residues 280–300 (MKVALALTVVAICVGVGAAVL) form a helical membrane-spanning segment. The pore-forming intramembrane region spans 310 to 329 (DAVYLAVMSVTTVGYGDHAF). The helical transmembrane segment at 336-356 (LFASAWLLVSTLAVARAFLYL) threads the bilayer. At 357–456 (AEMRIDKRHR…LNEKKKGKKS (100 aa)) the chain is on the cytoplasmic side. 2 EF-hand domains span residues 373–408 (LSRD…EMGK) and 412–447 (KDIM…VTDL). Ca(2+) contacts are provided by aspartate 386, aspartate 388, asparagine 390, tyrosine 392, glutamate 397, aspartate 425, lysine 431, and aspartate 436.

It belongs to the two pore domain potassium channel (TC 1.A.1.7) family. In terms of assembly, homodimer.

Its subcellular location is the membrane. Inward-rectifying potassium channel. This is Two pore potassium channel c (TPKC) from Oryza sativa subsp. japonica (Rice).